The primary structure comprises 388 residues: NADH-quinone oxidoreductase subunit D 2 (388 aa).

It belongs to the complex I 49 kDa subunit family. In terms of assembly, NDH-1 is composed of 14 different subunits. Subunits NuoB, C, D, E, F, and G constitute the peripheral sector of the complex.

It localises to the cell inner membrane. It catalyses the reaction a quinone + NADH + 5 H(+)(in) = a quinol + NAD(+) + 4 H(+)(out). NDH-1 shuttles electrons from NADH, via FMN and iron-sulfur (Fe-S) centers, to quinones in the respiratory chain. The immediate electron acceptor for the enzyme in this species is believed to be ubiquinone. Couples the redox reaction to proton translocation (for every two electrons transferred, four hydrogen ions are translocated across the cytoplasmic membrane), and thus conserves the redox energy in a proton gradient. The sequence is that of NADH-quinone oxidoreductase subunit D 2 from Sorangium cellulosum (strain So ce56) (Polyangium cellulosum (strain So ce56)).